Here is a 304-residue protein sequence, read N- to C-terminus: Acetyl-coenzyme A carboxylase carboxyl transferase subunit beta (304 aa).

One can recognise a CoA carboxyltransferase N-terminal domain in the interval Val-23–Val-292. Zn(2+)-binding residues include Cys-27, Cys-30, Cys-46, and Cys-49. The C4-type zinc finger occupies Cys-27–Cys-49. The interval Pro-283–Ala-304 is disordered.

Belongs to the AccD/PCCB family. As to quaternary structure, acetyl-CoA carboxylase is a heterohexamer composed of biotin carboxyl carrier protein (AccB), biotin carboxylase (AccC) and two subunits each of ACCase subunit alpha (AccA) and ACCase subunit beta (AccD). The cofactor is Zn(2+).

The protein resides in the cytoplasm. The enzyme catalyses N(6)-carboxybiotinyl-L-lysyl-[protein] + acetyl-CoA = N(6)-biotinyl-L-lysyl-[protein] + malonyl-CoA. It functions in the pathway lipid metabolism; malonyl-CoA biosynthesis; malonyl-CoA from acetyl-CoA: step 1/1. In terms of biological role, component of the acetyl coenzyme A carboxylase (ACC) complex. Biotin carboxylase (BC) catalyzes the carboxylation of biotin on its carrier protein (BCCP) and then the CO(2) group is transferred by the transcarboxylase to acetyl-CoA to form malonyl-CoA. This is Acetyl-coenzyme A carboxylase carboxyl transferase subunit beta from Salmonella agona (strain SL483).